Here is a 516-residue protein sequence, read N- to C-terminus: MRASLLAFSLAAAVAGGQQAGTLTAKRHPSLTWQKCTRGGCPTLNTTMVLDANWRWTHATSGSTKCYTGNKWQATLCPDGKSCAANCALDGADYTGTYGITGSGWSLTLQFVTDNVGARAYLMADDTQYQMLELLNQELWFDVDMSNIPCGLNGALYLSAMDADGGMRKYPTNKAGAKYATGYCDAQCPRDLKYINGIANVEGWTPSTNDANGIGDHGSCCSEMDIWEANKVSTAFTPHPCTTIEQHMCEGDSCGGTYSDDRYGVLCDADGCDFNSYRMGNTTFYGEGKTVDTSSKFTVVTQFIKDSAGDLAEIKAFYVQNGKVIENSQSNVDGVSGNSITQSFCKSQKTAFGDIDDFNKKGGLKQMGKALAQAMVLVMSIWDDHAANMLWLDSTYPVPKVPGAYRGSGPTTSGVPAEVDANAPNSKVAFSNIKFGHLGISPFSGGSSGTPPSNPSSSASPTSSTAKPSSTSTASNPSGTGAAHWAQCGGIGFSGPTTCPEPYTCAKDHDIYSQCV.

The first 17 residues, 1–17, serve as a signal peptide directing secretion; the sequence is MRASLLAFSLAAAVAGG. Positions 18–445 are catalytic; the sequence is QQAGTLTAKR…GHLGISPFSG (428 aa). N-linked (GlcNAc...) asparagine glycosylation is present at N45. Residue E223 is the Nucleophile of the active site. E228 serves as the catalytic Proton donor. The N-linked (GlcNAc...) asparagine glycan is linked to N281. Residues 444–481 are disordered; that stretch reads SGGSSGTPPSNPSSSASPTSSTAKPSSTSTASNPSGTG. A linker region spans residues 446 to 480; it reads GSSGTPPSNPSSSASPTSSTAKPSSTSTASNPSGT. The span at 449–481 shows a compositional bias: low complexity; the sequence is GTPPSNPSSSASPTSSTAKPSSTSTASNPSGTG. The CBM1 domain occupies 480 to 516; sequence TGAAHWAQCGGIGFSGPTTCPEPYTCAKDHDIYSQCV. Cystine bridges form between C488–C505 and C499–C515.

This sequence belongs to the glycosyl hydrolase 7 (cellulase C) family.

The protein localises to the secreted. It catalyses the reaction Hydrolysis of (1-&gt;4)-beta-D-glucosidic linkages in cellulose and cellotetraose, releasing cellobiose from the non-reducing ends of the chains.. This is Exoglucanase 1 (cbh-1) from Neurospora crassa (strain ATCC 24698 / 74-OR23-1A / CBS 708.71 / DSM 1257 / FGSC 987).